Here is a 729-residue protein sequence, read N- to C-terminus: Putative cyclic nucleotide-gated ion channel 19 (729 aa).

At 1-172 the chain is on the cytoplasmic side; the sequence is MAHTRTFTSR…SKFVQVWTRV (172 aa). The interval 52-82 is disordered; that stretch reads SGPIHSTRRTEPLFSPSPQESPDSSSTVDVP. The span at 67–81 shows a compositional bias: low complexity; sequence PSPQESPDSSSTVDV. The chain crosses the membrane as a helical span at residues 173–193; sequence LAFSSLVAIFIDPLFFFLLLI. Residues 194–208 are Extracellular-facing; that stretch reads QQDNKCIAIDWRATK. The chain crosses the membrane as a helical span at residues 209–229; it reads VLVSLRSITDLIFFINILLQF. The Cytoplasmic segment spans residues 230 to 261; sequence RLAYVAPESRIVGAGQLVDHPRKIARHYFRGK. A helical membrane pass occupies residues 262-282; sequence FLLDMFIVFPIPQIMILRIIP. The Extracellular segment spans residues 283 to 295; that stretch reads LHLGTRREESEKQ. A helical transmembrane segment spans residues 296–316; sequence ILRATVLFQYIPKLYRLLPLL. Topologically, residues 317-332 are cytoplasmic; sequence AGQTSTGFIFESAWAN. A helical membrane pass occupies residues 333–353; sequence FVINLLTFMLAGHAVGSCWYL. The Extracellular portion of the chain corresponds to 354-451; that stretch reads SALQRVKKCM…STLAGNLSPS (98 aa). Residues 452 to 472 traverse the membrane as a helical segment; that stretch reads YSVGEVFFTMGIIGLGLLLFA. Residues 473–729 lie on the Cytoplasmic side of the membrane; that stretch reads RLIGNMHNFL…LNTAHSNSNR (257 aa). A nucleoside 3',5'-cyclic phosphate is bound by residues 560–677 and E625; that span reads IFSL…VTSL. The segment at 678–694 is calmodulin-binding; sequence FSRFLRSHRVQGAIRYE. The IQ domain occupies 699–728; the sequence is RLRAAMQIQVAWRYRKRQLQRLNTAHSNSN.

Belongs to the cyclic nucleotide-gated cation channel (TC 1.A.1.5) family. In terms of assembly, homotetramer or heterotetramer.

The protein resides in the cell membrane. In terms of biological role, putative cyclic nucleotide-gated ion channel. This is Putative cyclic nucleotide-gated ion channel 19 (CNGC19) from Arabidopsis thaliana (Mouse-ear cress).